Reading from the N-terminus, the 58-residue chain is MSKFYKIWLVFDPRRVFVAQGVFLFLLAVLIHLILLSTPAFNWLTVATAKHGYVAAAQ.

At 1–15 (MSKFYKIWLVFDPRR) the chain is on the cytoplasmic side. The chain crosses the membrane as a helical span at residues 16-36 (VFVAQGVFLFLLAVLIHLILL). Position 32 (H32) interacts with a bacteriochlorophyll. The Periplasmic portion of the chain corresponds to 37–58 (STPAFNWLTVATAKHGYVAAAQ).

This sequence belongs to the antenna complex alpha subunit family. As to quaternary structure, the core complex is formed by different alpha and beta chains, binding bacteriochlorophyll molecules, and arranged most probably in tetrameric structures disposed around the reaction center. The non-pigmented gamma chains may constitute additional components.

It localises to the cell inner membrane. Antenna complexes are light-harvesting systems, which transfer the excitation energy to the reaction centers. This chain is Light-harvesting protein B-870 alpha chain (pufA), found in Rhodobacter capsulatus (Rhodopseudomonas capsulata).